A 90-amino-acid polypeptide reads, in one-letter code: UPF0367 protein SYNPCC7002_A0153 (90 aa).

It belongs to the UPF0367 family.

In Picosynechococcus sp. (strain ATCC 27264 / PCC 7002 / PR-6) (Agmenellum quadruplicatum), this protein is UPF0367 protein SYNPCC7002_A0153.